Here is a 200-residue protein sequence, read N- to C-terminus: Small ribosomal subunit protein uS4 (200 aa).

A disordered region spans residues 22-42 (TGKELEKRPYAPGPHGPNQRK). The region spanning 92–152 (ARLDNLVYRM…EKSNSLVVVK (61 aa)) is the S4 RNA-binding domain.

Belongs to the universal ribosomal protein uS4 family. In terms of assembly, part of the 30S ribosomal subunit. Contacts protein S5. The interaction surface between S4 and S5 is involved in control of translational fidelity.

In terms of biological role, one of the primary rRNA binding proteins, it binds directly to 16S rRNA where it nucleates assembly of the body of the 30S subunit. With S5 and S12 plays an important role in translational accuracy. This chain is Small ribosomal subunit protein uS4, found in Bacillus cereus (strain B4264).